Here is a 374-residue protein sequence, read N- to C-terminus: Translocating chain-associated membrane protein 1 (374 aa).

The Cytoplasmic segment spans residues 1 to 32; sequence MAIRKKSNKNPPVLSHEFVLQNHADIVSCLAM. The helical transmembrane segment at 33-53 threads the bilayer; it reads LFLLGLMFEITAKGAIIFVAL. Over 54–81 the chain is Lumenal; the sequence is QYNVTRPATEEQAAESASLYYYGIKDLA. Asparagine 56 is a glycosylation site (N-linked (GlcNAc...) asparagine). A helical membrane pass occupies residues 82–102; it reads TVFFYMLVAIIVHAIIQEYVL. The Cytoplasmic segment spans residues 103–121; sequence DKINRRMHFSKTKHSKFNE. The region spanning 117 to 326 is the TLC domain; the sequence is SKFNESGQLS…NFQLRRWREH (210 aa). A helical transmembrane segment spans residues 122-142; sequence SGQLSAFYLFACVWGTFILVS. The Lumenal segment spans residues 143–159; the sequence is ENYISDPTILWRAYPHN. A helical membrane pass occupies residues 160 to 180; that stretch reads LMTFQMKFFYISQLAYWLHAF. The Cytoplasmic portion of the chain corresponds to 181-192; the sequence is PELYFQKTKKED. A helical membrane pass occupies residues 193–213; it reads IPRQLVYIGLYLFHIAGAYLL. Position 214 (asparagine 214) is a topological domain, lumenal. The helical transmembrane segment at 215–235 threads the bilayer; it reads LNHLGLVLLVLHYFVEFLFHI. Residues 236-251 are Cytoplasmic-facing; that stretch reads SRLFYFSDEKYQKGFS. A helical membrane pass occupies residues 252-272; that stretch reads LWAVLFVLGRLLTLILSVLTV. Residues 273–297 are Lumenal-facing; it reads GFGLARAENQKLDFSTGNFNVLAVR. The chain crosses the membrane as a helical span at residues 298–318; that stretch reads IAVLASICITQAFMMWKFINF. Residues 319-374 lie on the Cytoplasmic side of the membrane; that stretch reads QLRRWREHSAFQAPPVKRKPAVTKGRSSRKGTENGVNGTVTSNGADSPRSRKEKSS. Residues 333–374 are disordered; it reads PVKRKPAVTKGRSSRKGTENGVNGTVTSNGADSPRSRKEKSS. Residues 334-347 are compositionally biased toward basic residues; sequence VKRKPAVTKGRSSR. Positions 352 to 363 are enriched in polar residues; it reads NGVNGTVTSNGA. A Phosphoserine modification is found at serine 365.

It belongs to the TRAM family. In terms of assembly, interacts with SEC61B. May interact with Derlin-1/DERL1. N-glycosylated.

The protein resides in the endoplasmic reticulum membrane. Involved in the translocation of nascent protein chains into or through the endoplasmic reticulum (ER) membrane by facilitating the proper chain positioning at the SEC61 channel. Regulates the exposure of nascent secretory protein chain to the cytosol during translocation into the ER. May affect the phospholipid bilayer in the vicinity of the lateral gate of the SEC61 channel, thereby facilitating ER protein transport. Intimately associates with transmembrane (TM) domain of nascent membrane proteins during the entire integration process into the ER membrane. Associates with the second TM domain of G-protein-coupled receptor opsin/OPSD nascent chain in the ER membrane, which may facilitate its integration into the membrane. Under conditions of ER stress, participates in the disposal of misfolded ER membrane proteins during the unfolded protein response (UPR), an integrated stress response (ISR) pathway, by selectively retrotranslocating misfolded ER-membrane proteins from the ER into the cytosol where they are ubiquitinated and degraded by the proteasome. This chain is Translocating chain-associated membrane protein 1, found in Rattus norvegicus (Rat).